The following is a 721-amino-acid chain: Glycine--tRNA ligase beta subunit (721 aa).

Belongs to the class-II aminoacyl-tRNA synthetase family. Tetramer of two alpha and two beta subunits.

Its subcellular location is the cytoplasm. It catalyses the reaction tRNA(Gly) + glycine + ATP = glycyl-tRNA(Gly) + AMP + diphosphate. This is Glycine--tRNA ligase beta subunit from Sinorhizobium fredii (strain NBRC 101917 / NGR234).